A 101-amino-acid chain; its full sequence is CRISPR-associated endoribonuclease Cas2 (101 aa).

Aspartate 8 is a binding site for Mg(2+).

It belongs to the CRISPR-associated endoribonuclease Cas2 protein family. As to quaternary structure, homodimer, forms a heterotetramer with a Cas1 homodimer. Mg(2+) is required as a cofactor.

Its function is as follows. CRISPR (clustered regularly interspaced short palindromic repeat), is an adaptive immune system that provides protection against mobile genetic elements (viruses, transposable elements and conjugative plasmids). CRISPR clusters contain sequences complementary to antecedent mobile elements and target invading nucleic acids. CRISPR clusters are transcribed and processed into CRISPR RNA (crRNA). Functions as a ssRNA-specific endoribonuclease. Involved in the integration of spacer DNA into the CRISPR cassette. The chain is CRISPR-associated endoribonuclease Cas2 from Ligilactobacillus salivarius (strain UCC118) (Lactobacillus salivarius).